A 626-amino-acid chain; its full sequence is FAD-binding monooxygenase moxY (626 aa).

Residues 1–23 show a composition bias toward low complexity; it reads MAPFLSAHGESASSSSSSSPTPS. A disordered region spans residues 1-47; sequence MAPFLSAHGESASSSSSSSPTPSRHTRNQHVDYSTPGSTGYNIPQNT. A compositionally biased stretch (polar residues) spans 31–47; the sequence is VDYSTPGSTGYNIPQNT. FAD-binding positions include 96–99, 108–109, and Tyr-114; these read TWLE and DI. Residue 106 to 108 coordinates NADP(+); it reads GCD. Residues 243–249 and 266–267 contribute to the NADP(+) site; these read SGASSIQ and RT.

Belongs to the FAD-binding monooxygenase family. FAD serves as cofactor.

It participates in mycotoxin biosynthesis. In terms of biological role, FAD-binding monooxygenase; part of the fragmented gene cluster that mediates the biosynthesis of dothistromin (DOTH), a polyketide toxin very similar in structure to the aflatoxin precursor, versicolorin B. The first step of the pathway is the conversion of acetate to norsolorinic acid (NOR) and requires the fatty acid synthase subunits hexA and hexB, as well as the polyketide synthase pksA. PksA combines a hexanoyl starter unit and 7 malonyl-CoA extender units to synthesize the precursor NOR. The hexanoyl starter unit is provided to the acyl-carrier protein (ACP) domain by the fungal fatty acid synthase hexA/hexB. The second step is the conversion of NOR to averantin (AVN) and requires the norsolorinic acid ketoreductase nor1, which catalyzes the dehydration of norsolorinic acid to form (1'S)-averantin. The cytochrome P450 monooxygenase avnA then catalyzes the hydroxylation of AVN to 5'hydroxyaverantin (HAVN). The next step is performed by adhA that transforms HAVN to averufin (AVF). Averufin might then be converted to hydroxyversicolorone by cypX and avfA. Hydroxyversicolorone is further converted versiconal hemiacetal acetate (VHA) by moxY. VHA is then the substrate for the versiconal hemiacetal acetate esterase est1 to yield versiconal (VAL). Versicolorin B synthase vbsA then converts VAL to versicolorin B (VERB) by closing the bisfuran ring. Then, the activity of the versicolorin B desaturase verB leads to versicolorin A (VERA). DotB, a predicted chloroperoxidase, may perform epoxidation of the A-ring of VERA. Alternatively, a cytochrome P450, such as cypX or avnA could catalyze this step. It is also possible that another, uncharacterized, cytochrome P450 enzyme is responsible for this step. Opening of the epoxide could potentially be achieved by the epoxide hydrolase epoA. However, epoA seems not to be required for DOTH biosynthesis, but other epoxide hydrolases may have the ability to complement this hydrolysis. Alternatively, opening of the epoxide ring could be achieved non-enzymatically. The next step is the deoxygenation of ring A to yield the 5,8-dihydroxyanthraquinone which is most likely catalyzed by the NADPH dehydrogenase encoded by ver1. The last stages of DOTH biosynthesis are proposed to involve hydroxylation of the bisfuran. OrdB and norB might have oxidative roles here. An alternative possibility is that cytochrome P450 monoogenases such as avnA and cypX might perform these steps in addition to previously proposed steps. The protein is FAD-binding monooxygenase moxY of Dothistroma septosporum (Red band needle blight fungus).